The sequence spans 289 residues: NAD kinase (289 aa).

Asp-82 acts as the Proton acceptor in catalysis. NAD(+)-binding positions include 82-83 (DG), Arg-87, 150-151 (NE), Lys-161, Arg-178, Asp-180, 191-196 (TAYAMS), Ala-215, and Gln-250.

This sequence belongs to the NAD kinase family. A divalent metal cation is required as a cofactor.

The protein localises to the cytoplasm. It carries out the reaction NAD(+) + ATP = ADP + NADP(+) + H(+). Its function is as follows. Involved in the regulation of the intracellular balance of NAD and NADP, and is a key enzyme in the biosynthesis of NADP. Catalyzes specifically the phosphorylation on 2'-hydroxyl of the adenosine moiety of NAD to yield NADP. This chain is NAD kinase, found in Methanosarcina mazei (strain ATCC BAA-159 / DSM 3647 / Goe1 / Go1 / JCM 11833 / OCM 88) (Methanosarcina frisia).